The following is a 569-amino-acid chain: Glutamate--tRNA ligase (569 aa).

The 'HIGH' region motif lies at 108–118 (PNPDFVLHLGS).

This sequence belongs to the class-I aminoacyl-tRNA synthetase family. Glutamate--tRNA ligase type 2 subfamily.

It localises to the cytoplasm. It carries out the reaction tRNA(Glu) + L-glutamate + ATP = L-glutamyl-tRNA(Glu) + AMP + diphosphate. In terms of biological role, catalyzes the attachment of glutamate to tRNA(Glu) in a two-step reaction: glutamate is first activated by ATP to form Glu-AMP and then transferred to the acceptor end of tRNA(Glu). The chain is Glutamate--tRNA ligase from Thermofilum pendens (strain DSM 2475 / Hrk 5).